We begin with the raw amino-acid sequence, 198 residues long: Orotate phosphoribosyltransferase (198 aa).

5-phospho-alpha-D-ribose 1-diphosphate contacts are provided by residues Arg108, Lys109, Lys112, His114, and 135-143 (EDVVTTGKS). Positions 139 and 167 each coordinate orotate.

This sequence belongs to the purine/pyrimidine phosphoribosyltransferase family. PyrE subfamily. As to quaternary structure, homodimer. Mg(2+) serves as cofactor.

It catalyses the reaction orotidine 5'-phosphate + diphosphate = orotate + 5-phospho-alpha-D-ribose 1-diphosphate. It participates in pyrimidine metabolism; UMP biosynthesis via de novo pathway; UMP from orotate: step 1/2. Functionally, catalyzes the transfer of a ribosyl phosphate group from 5-phosphoribose 1-diphosphate to orotate, leading to the formation of orotidine monophosphate (OMP). This is Orotate phosphoribosyltransferase from Synechocystis sp. (strain ATCC 27184 / PCC 6803 / Kazusa).